The following is a 637-amino-acid chain: ATP-dependent rRNA helicase SPB4 (637 aa).

Positions 10–38 match the Q motif motif; that stretch reads WENLRVDLEPWLKDAIRSLNYPTMTPVQA. Residues 41-236 enclose the Helicase ATP-binding domain; sequence IPLLSGNKDV…RTGMNNPVKL (196 aa). Residue 54 to 61 coordinates ATP; the sequence is AVTGSGKT. The DEAD box motif lies at 184–187; sequence DEAD. One can recognise a Helicase C-terminal domain in the interval 266 to 444; it reads KLTTMLQMLR…KFQKKLRKYM (179 aa). Residues 528–597 adopt a coiled-coil conformation; that stretch reads SAEKARLENL…QLEAEQERGG (70 aa). The interval 554-637 is disordered; that stretch reads LKVKNEAWSS…GVLQGSFDDL (84 aa). Composition is skewed to basic and acidic residues over residues 564–576 and 583–598; these read KTEKRETKLERKE and EAIEKQLEAEQERGGL. The span at 621–630 shows a compositional bias: gly residues; it reads NGGGGGGGVL.

Belongs to the DEAD box helicase family. DDX55/SPB4 subfamily. In terms of assembly, component of pre-60S ribosomal complexes.

The protein resides in the nucleus. It localises to the nucleolus. The enzyme catalyses ATP + H2O = ADP + phosphate + H(+). In terms of biological role, ATP-binding RNA helicase involved in the biogenesis of 60S ribosomal subunits. Binds 90S pre-ribosomal particles and dissociates from pre-60S ribosomal particles after processing of 27SB pre-rRNA. Required for the normal formation of 18S rRNA through the processing of pre-rRNAs at sites A0, A1 and A2, and the normal formation of 25S and 5.8S rRNAs through the processing of pre-rRNAs at sites C1 and C2. The sequence is that of ATP-dependent rRNA helicase SPB4 from Lodderomyces elongisporus (strain ATCC 11503 / CBS 2605 / JCM 1781 / NBRC 1676 / NRRL YB-4239) (Yeast).